A 168-amino-acid polypeptide reads, in one-letter code: uncharacterized protein (168 aa).

2 CBS domains span residues 20–77 and 117–168; these read IMKK…NEDL and MTRK…EALI.

This is an uncharacterized protein from Methanocaldococcus jannaschii (strain ATCC 43067 / DSM 2661 / JAL-1 / JCM 10045 / NBRC 100440) (Methanococcus jannaschii).